The following is a 1133-amino-acid chain: Lysylphosphatidylglycerol biosynthesis bifunctional protein LysX (1133 aa).

A phosphatidylglycerol lysyltransferase region spans residues 1 to 626 (MTTVDASPGI…LLHHDGSTPD (626 aa)). Helical transmembrane passes span 43–63 (VPAA…IASV), 82–102 (LFNF…LAAA), 109–129 (IAWL…AVDM), 140–160 (FGEN…VLSY), 177–197 (AVLV…VELF), 233–253 (LNAI…IVLF), and 575–595 (LIPR…LPFS). Residues 627-1133 (VSGLQTADVD…TLPFPLAKPH (507 aa)) form a lysine--tRNA ligase region. Residues Asp-1045 and Glu-1052 each contribute to the Mg(2+) site.

This sequence in the N-terminal section; belongs to the LPG synthetase family. The protein in the C-terminal section; belongs to the class-II aminoacyl-tRNA synthetase family. Mg(2+) serves as cofactor.

It localises to the cell membrane. The catalysed reaction is tRNA(Lys) + L-lysine + ATP = L-lysyl-tRNA(Lys) + AMP + diphosphate. It catalyses the reaction L-lysyl-tRNA(Lys) + a 1,2-diacyl-sn-glycero-3-phospho-(1'-sn-glycerol) = a 1,2-diacyl-sn-glycero-3-phospho-1'-(3'-O-L-lysyl)-sn-glycerol + tRNA(Lys). Its function is as follows. Catalyzes the production of L-lysyl-tRNA(Lys)transfer and the transfer of a lysyl group from L-lysyl-tRNA(Lys) to membrane-bound phosphatidylglycerol (PG), which produces lysylphosphatidylglycerol (LPG), one of the components of the bacterial membrane with a positive net charge. LPG synthesis contributes to the resistance to cationic antimicrobial peptides (CAMPs) and likely protects M.tuberculosis against the CAMPs produced by competiting microorganisms (bacteriocins). In fact, the modification of anionic phosphatidylglycerol with positively charged L-lysine results in repulsion of the peptides. The protein is Lysylphosphatidylglycerol biosynthesis bifunctional protein LysX (lysX) of Mycobacterium leprae (strain Br4923).